We begin with the raw amino-acid sequence, 203 residues long: Guanylate kinase (203 aa).

Positions glycine 3–threonine 181 constitute a Guanylate kinase-like domain. An ATP-binding site is contributed by alanine 10–serine 17.

The protein belongs to the guanylate kinase family.

It localises to the cytoplasm. The enzyme catalyses GMP + ATP = GDP + ADP. Essential for recycling GMP and indirectly, cGMP. In Xanthomonas oryzae pv. oryzae (strain MAFF 311018), this protein is Guanylate kinase.